Reading from the N-terminus, the 155-residue chain is Large ribosomal subunit protein eL24 (155 aa).

Residues 94-129 are compositionally biased toward basic and acidic residues; it reads RSLKPEVRKAQRDEKKKADKEKKKADKAARKSEKAK. Positions 94–155 are disordered; it reads RSLKPEVRKA…AFQKVAATSR (62 aa).

Belongs to the eukaryotic ribosomal protein eL24 family.

This is Large ribosomal subunit protein eL24 (RPL24) from Kluyveromyces lactis (strain ATCC 8585 / CBS 2359 / DSM 70799 / NBRC 1267 / NRRL Y-1140 / WM37) (Yeast).